Reading from the N-terminus, the 287-residue chain is Large ribosomal subunit protein uL2 (287 aa).

The interval 221–287 (RGSVMNPCDH…SKRSRGGRDS (67 aa)) is disordered. The span at 258–287 (KTRKRNKPSNRFVLRKRRRVSKRSRGGRDS) shows a compositional bias: basic residues.

The protein belongs to the universal ribosomal protein uL2 family. As to quaternary structure, part of the 50S ribosomal subunit. Forms a bridge to the 30S subunit in the 70S ribosome.

Its function is as follows. One of the primary rRNA binding proteins. Required for association of the 30S and 50S subunits to form the 70S ribosome, for tRNA binding and peptide bond formation. It has been suggested to have peptidyltransferase activity; this is somewhat controversial. Makes several contacts with the 16S rRNA in the 70S ribosome. The chain is Large ribosomal subunit protein uL2 from Prochlorococcus marinus (strain MIT 9211).